A 447-amino-acid chain; its full sequence is MTTILKHLPVGQRIGIAFSGGLDTSAALLWMRQKGAVPYAYTANLGQPDEEDYDAIPRRAMEYGAENARLIDCRKQLVAEGIAAIQCGAFHNTTGGLTYFNTTPLGRAVTGTMLVAAMKEDGVNIWGDGSTYKGNDIERFYRYGLLTNAELQIYKPWLDTDFIDELGGRHEMSEFMIACGFDYKMSVEKAYSTDSNMLGATHEAKDLEYLNSSVKIVNPIMGVKFWDESVKIPAEEVTVRFEQGHPVALNGKTFSDDVEMMLEANRIGGRHGLGMSDQIENRIIEAKSRGIYEAPGMALLHIAYERLLTGIHNEDTIEQYHAHGRQLGRLLYQGRWFDSQALMLRDSLQRWVASQITGEVTLELRRGNDYSILNTVSENLTYKPERLTMEKGDSVFSPDDRIGQLTMRNLDITDTREKLFGYAKTGLLSSSAASGVPQMENLENKGQ.

Residues Ala-17–Ser-25 and Ala-43 contribute to the ATP site. L-citrulline is bound at residue Tyr-99. Positions 129 and 131 each coordinate ATP. The L-aspartate site is built by Thr-131, Asn-135, and Asp-136. Residue Asn-135 participates in L-citrulline binding. Asp-136 lines the ATP pocket. 2 residues coordinate L-citrulline: Arg-139 and Ser-192. Position 194 (Asp-194) interacts with ATP. The L-citrulline site is built by Thr-201, Glu-203, and Glu-280.

Belongs to the argininosuccinate synthase family. Type 2 subfamily. In terms of assembly, homotetramer.

Its subcellular location is the cytoplasm. It carries out the reaction L-citrulline + L-aspartate + ATP = 2-(N(omega)-L-arginino)succinate + AMP + diphosphate + H(+). It functions in the pathway amino-acid biosynthesis; L-arginine biosynthesis; L-arginine from L-ornithine and carbamoyl phosphate: step 2/3. The protein is Argininosuccinate synthase (argG) of Escherichia coli O157:H7.